A 208-amino-acid chain; its full sequence is Ribonuclease HII (208 aa).

The 205-residue stretch at methionine 1–isoleucine 205 folds into the RNase H type-2 domain. A divalent metal cation-binding residues include aspartate 7, glutamate 8, and aspartate 104.

Belongs to the RNase HII family. It depends on Mn(2+) as a cofactor. Mg(2+) serves as cofactor.

Its subcellular location is the cytoplasm. It catalyses the reaction Endonucleolytic cleavage to 5'-phosphomonoester.. Its function is as follows. Endonuclease that specifically degrades the RNA of RNA-DNA hybrids. The polypeptide is Ribonuclease HII (Sulfurisphaera tokodaii (strain DSM 16993 / JCM 10545 / NBRC 100140 / 7) (Sulfolobus tokodaii)).